Reading from the N-terminus, the 176-residue chain is Caltractin (176 aa).

The segment at 1–27 is disordered; sequence MNRAAIAAGKPSGSISTGKPRRKTRAE. EF-hand domains lie at 31–66, 67–102, 104–139, and 140–175; these read EMKH…LGFD, VKKE…KISN, DPTE…LSEN, and ISDE…TSAF. Residues aspartate 44, aspartate 46, serine 48, arginine 50, and glutamate 55 each contribute to the Ca(2+) site. Positions 153, 155, 157, 159, and 164 each coordinate Ca(2+).

The protein belongs to the centrin family. In terms of assembly, monomer.

It localises to the cytoplasm. Its subcellular location is the cytoskeleton. It is found in the microtubule organizing center. The protein localises to the centrosome. Functionally, plays a fundamental role in microtubule-organizing center structure and function. This Giardia intestinalis (Giardia lamblia) protein is Caltractin (CAL).